A 440-amino-acid polypeptide reads, in one-letter code: F-box protein pof12 (440 aa).

The F-box domain maps to 8-54 (KNPASIFSHETLLHVLNDLSAHDLAALERVSRSWNSIVRRSSVWHNL).

Interacts with skp1.

The protein localises to the nucleus. This Schizosaccharomyces pombe (strain 972 / ATCC 24843) (Fission yeast) protein is F-box protein pof12 (pof12).